Consider the following 451-residue polypeptide: Probable DNA polymerase delta small subunit (451 aa).

This sequence belongs to the DNA polymerase delta/II small subunit family. In terms of assembly, heterodimer with subunits of 125 kDa and 50 kDa.

Its subcellular location is the nucleus. It catalyses the reaction DNA(n) + a 2'-deoxyribonucleoside 5'-triphosphate = DNA(n+1) + diphosphate. The function of the small subunit is not yet clear. This is Probable DNA polymerase delta small subunit from Caenorhabditis elegans.